Consider the following 61-residue polypeptide: Small ribosomal subunit protein uS14 (61 aa).

Zn(2+) is bound by residues cysteine 24, cysteine 27, cysteine 40, and cysteine 43.

This sequence belongs to the universal ribosomal protein uS14 family. Zinc-binding uS14 subfamily. In terms of assembly, part of the 30S ribosomal subunit. Contacts proteins S3 and S10. Zn(2+) serves as cofactor.

Functionally, binds 16S rRNA, required for the assembly of 30S particles and may also be responsible for determining the conformation of the 16S rRNA at the A site. This chain is Small ribosomal subunit protein uS14, found in Mycoplasma pneumoniae (strain ATCC 29342 / M129 / Subtype 1) (Mycoplasmoides pneumoniae).